Here is a 177-residue protein sequence, read N- to C-terminus: NADH-quinone oxidoreductase subunit B (177 aa).

[4Fe-4S] cluster-binding residues include cysteine 53, cysteine 54, cysteine 118, and cysteine 148.

The protein belongs to the complex I 20 kDa subunit family. NDH-1 is composed of 14 different subunits. Subunits NuoB, C, D, E, F, and G constitute the peripheral sector of the complex. [4Fe-4S] cluster is required as a cofactor.

It is found in the cell membrane. It catalyses the reaction a quinone + NADH + 5 H(+)(in) = a quinol + NAD(+) + 4 H(+)(out). In terms of biological role, NDH-1 shuttles electrons from NADH, via FMN and iron-sulfur (Fe-S) centers, to quinones in the respiratory chain. The immediate electron acceptor for the enzyme in this species is believed to be a menaquinone. Couples the redox reaction to proton translocation (for every two electrons transferred, four hydrogen ions are translocated across the cytoplasmic membrane), and thus conserves the redox energy in a proton gradient. This is NADH-quinone oxidoreductase subunit B from Anoxybacillus flavithermus (strain DSM 21510 / WK1).